The sequence spans 260 residues: Phosphatidylglycerol--prolipoprotein diacylglyceryl transferase (260 aa).

A run of 3 helical transmembrane segments spans residues 16–36 (LEFRWYGLMYILGFIAAYFIV), 55–75 (VIFSLAIGVILGGRLGYILFY), and 87–107 (LFAVWEGGMSFHGGLLGVILA). R138 serves as a coordination point for a 1,2-diacyl-sn-glycero-3-phospho-(1'-sn-glycerol). 2 helical membrane-spanning segments follow: residues 198 to 218 (GVVFWTFIAFYGLFRFLVEFF) and 232 to 252 (FSMGQLLSFPMFLLGLTMAVL).

The protein belongs to the Lgt family.

The protein localises to the cell inner membrane. The enzyme catalyses L-cysteinyl-[prolipoprotein] + a 1,2-diacyl-sn-glycero-3-phospho-(1'-sn-glycerol) = an S-1,2-diacyl-sn-glyceryl-L-cysteinyl-[prolipoprotein] + sn-glycerol 1-phosphate + H(+). Its pathway is protein modification; lipoprotein biosynthesis (diacylglyceryl transfer). In terms of biological role, catalyzes the transfer of the diacylglyceryl group from phosphatidylglycerol to the sulfhydryl group of the N-terminal cysteine of a prolipoprotein, the first step in the formation of mature lipoproteins. The polypeptide is Phosphatidylglycerol--prolipoprotein diacylglyceryl transferase (Geobacter sulfurreducens (strain ATCC 51573 / DSM 12127 / PCA)).